A 161-amino-acid chain; its full sequence is MTTTLERGFSEEQEALVVKSWNVMKKNSGELGLKFFLKIFEIAPSAQKLFSFLRDSTVPLEQNPKLKPHAVSVFVMTCDSAVQLRKAGKVTVRESNLKKLGATHFRTGVANEHFEVTKFALLETIKEAVPEMWSPAMKNAWGEAYDQLVDAIKSEMKPPSS.

A Globin domain is found at glycine 8–lysine 157. The Homodimerization motif lies at glutamate 41–serine 45. Residues serine 51, lysine 65, histidine 69, lysine 99, threonine 103, and histidine 104 each coordinate heme b. The Homodimerization motif lies at asparagine 111–glutamate 123.

This sequence belongs to the plant globin family. As to quaternary structure, homodimer. Heme b is required as a cofactor. In terms of tissue distribution, predominantly expressed in roots, cotyledons, stems and nodules (confined to some cells associated with the nitrogen-fixing Bradyrhizobium symbiont), and, to a lower extent, in flowers, young leaves, pods and seeds.

Its subcellular location is the cytoplasm. It localises to the nucleus. The catalysed reaction is Fe(III)-heme b-[protein] + nitric oxide + H2O = Fe(II)-heme b-[protein] + nitrite + 2 H(+). Its function is as follows. Phytoglobin that reduces nitrite to nitric oxide (NO) under anoxic conditions (e.g. during flooding or in waterlogged soil) and upon root nodulation. Required for general plant development and during nodulation, especially for the onset of symbiosis. Monitors nitric oxide (NO) levels during early phase of the nitrogen-fixing symbiosis and buffers oxygen in functioning nodules. May not function as an oxygen storage or transport protein. Has an unusually high affinity for O(2) through a hexacoordinate heme iron because of a very low dissociation constant. Involved in water stress tolerance. The polypeptide is Anaerobic nitrite reductase Hb2 (Glycine max (Soybean)).